The primary structure comprises 313 residues: tRNA uridine(34) hydroxylase (313 aa).

The region spanning 124 to 218 (SDPEVLLIDT…YLEEVPQEET (95 aa)) is the Rhodanese domain. The active-site Cysteine persulfide intermediate is the C178.

The protein belongs to the TrhO family.

It carries out the reaction uridine(34) in tRNA + AH2 + O2 = 5-hydroxyuridine(34) in tRNA + A + H2O. Catalyzes oxygen-dependent 5-hydroxyuridine (ho5U) modification at position 34 in tRNAs. The chain is tRNA uridine(34) hydroxylase from Pseudomonas fluorescens (strain Pf0-1).